We begin with the raw amino-acid sequence, 490 residues long: GTPase Der (490 aa).

EngA-type G domains lie at 3–166 (PVVA…MDDV) and 203–376 (IKLA…DSST). GTP contacts are provided by residues 9–16 (GRPNVGKS), 56–60 (DTGGI), 118–121 (NKTD), 209–216 (GRPNVGKS), 256–260 (DTAGV), and 321–324 (NKWD). Positions 377–461 (RRVSTAMLTR…PIRIQFKEGE (85 aa)) constitute a KH-like domain.

This sequence belongs to the TRAFAC class TrmE-Era-EngA-EngB-Septin-like GTPase superfamily. EngA (Der) GTPase family. Associates with the 50S ribosomal subunit.

GTPase that plays an essential role in the late steps of ribosome biogenesis. The protein is GTPase Der of Salmonella choleraesuis (strain SC-B67).